Consider the following 251-residue polypeptide: Aspartate/glutamate leucyltransferase (251 aa).

Belongs to the R-transferase family. Bpt subfamily.

It localises to the cytoplasm. It carries out the reaction N-terminal L-glutamyl-[protein] + L-leucyl-tRNA(Leu) = N-terminal L-leucyl-L-glutamyl-[protein] + tRNA(Leu) + H(+). The enzyme catalyses N-terminal L-aspartyl-[protein] + L-leucyl-tRNA(Leu) = N-terminal L-leucyl-L-aspartyl-[protein] + tRNA(Leu) + H(+). Its function is as follows. Functions in the N-end rule pathway of protein degradation where it conjugates Leu from its aminoacyl-tRNA to the N-termini of proteins containing an N-terminal aspartate or glutamate. In Xanthomonas euvesicatoria pv. vesicatoria (strain 85-10) (Xanthomonas campestris pv. vesicatoria), this protein is Aspartate/glutamate leucyltransferase.